Here is an 884-residue protein sequence, read N- to C-terminus: Alanine--tRNA ligase (884 aa).

Zn(2+) is bound by residues His-572, His-576, Cys-673, and His-677.

It belongs to the class-II aminoacyl-tRNA synthetase family. Zn(2+) is required as a cofactor.

It is found in the cytoplasm. The catalysed reaction is tRNA(Ala) + L-alanine + ATP = L-alanyl-tRNA(Ala) + AMP + diphosphate. Functionally, catalyzes the attachment of alanine to tRNA(Ala) in a two-step reaction: alanine is first activated by ATP to form Ala-AMP and then transferred to the acceptor end of tRNA(Ala). Also edits incorrectly charged Ser-tRNA(Ala) and Gly-tRNA(Ala) via its editing domain. The chain is Alanine--tRNA ligase from Xylella fastidiosa (strain M23).